The chain runs to 88 residues: Small ribosomal subunit protein bS16 (88 aa).

The protein belongs to the bacterial ribosomal protein bS16 family.

The sequence is that of Small ribosomal subunit protein bS16 from Mycoplasma pneumoniae (strain ATCC 29342 / M129 / Subtype 1) (Mycoplasmoides pneumoniae).